The primary structure comprises 135 residues: RuBisCO chaperone RbcX (135 aa).

The tract at residues 103–135 is disordered; sequence QHLERMTQVSLSHPSPESEQQQFSDPDWDNLAS. The segment covering 109–126 has biased composition (polar residues); it reads TQVSLSHPSPESEQQQFS.

Belongs to the RbcX family. In terms of assembly, homodimer. Interacts with the exposed C-terminal peptide of RbcL ('Glu-459-Asp-468'); binds 1 RbcL peptide per homodimer. Contacts a second RbcL monomer via its peripheral polar surface. A slightly longer RbcL peptide binds to RbcX2 with a higher affinity.

It is found in the carboxysome. It localises to the cytoplasm. An RbcL-specific chaperone. The central cleft of the RbcX homodimer (RbcX2) binds the C-terminus of an RbcL monomer, stabilizing the C-terminus and probably preventing its reassociation with chaperonin GroEL-ES. At the same time the peripheral region of RbcX2 binds a second RbcL monomer, bridging the RbcL homodimers in the correct orientation. The RbcX2(2)-bound RbcL dimers then assemble into the RbcL8 core (RbcL8-(RbcX2)8). RbcS binding triggers the release of RbcX2. Its function is as follows. Required for optimal reconstitution of RuBisCO upon expression of rbcL-rbcS subunits in E.coli. The polypeptide is RuBisCO chaperone RbcX (Anabaena sp. (strain CA / ATCC 33047)).